The chain runs to 184 residues: Probable type 3 secretion system regulator AscH (184 aa).

Positions 1–25 (MKIEGSDQLGGEQPQRQPLPPESMA) are disordered.

It belongs to the YopR family.

The protein resides in the secreted. Functionally, may be involved in the regulation of the assembly of the type III secretion system (T3SS), also called injectisome, which is used to inject bacterial effector proteins into eukaryotic host cells. May control the polymerization of the needle. This chain is Probable type 3 secretion system regulator AscH, found in Aeromonas salmonicida subsp. salmonicida.